Reading from the N-terminus, the 392-residue chain is Vascular endothelial growth factor A, long form (392 aa).

Disordered regions lie at residues methionine 1–valine 44 and aspartate 73–arginine 174. Residues proline 89 to glycine 104 show a composition bias toward basic and acidic residues. Composition is skewed to low complexity over residues alanine 121–proline 143 and proline 158–arginine 174. 3 cysteine pairs are disulfide-bonded: cysteine 229–cysteine 271, cysteine 260–cysteine 305, and cysteine 264–cysteine 307. A glycan (N-linked (GlcNAc...) asparagine) is linked at asparagine 278. The span at proline 309–serine 320 shows a compositional bias: basic and acidic residues. A disordered region spans residues proline 309 to phenylalanine 337. Positions valine 321–phenylalanine 337 are enriched in basic residues.

This sequence belongs to the PDGF/VEGF growth factor family. In terms of assembly, homodimer; disulfide-linked. Also found as heterodimer with PGF. Interacts with NRP1. Interacts with isoform 2 of BSG. Interacts with CD82; this interaction inhibits VEGFA-mediated signaling pathway. Post-translationally, produced by use of an alternative upstream CUG codon and post-translationally processed into the N-terminal N-VEGF form and the C-terminal secreted VEGFA form. In developing embryos, expressed mainly in the choroid plexus, paraventricular neuroepithelium, placenta and kidney glomeruli. Also found in bronchial epithelium, adrenal gland and in seminiferous tubules of testis. High expression continues in kidney glomeruli and choroid plexus in adults.

The protein resides in the cytoplasm. It is found in the nucleus. Its subcellular location is the secreted. The protein localises to the endoplasmic reticulum. It localises to the golgi apparatus. The protein resides in the extracellular space. It is found in the extracellular matrix. Its subcellular location is the cell membrane. Its function is as follows. Participates in the induction of key genes involved in the response to hypoxia and in the induction of angiogenesis such as HIF1A. Involved in protecting cells from hypoxia-mediated cell death. Growth factor active in angiogenesis, vasculogenesis and endothelial cell growth. Induces endothelial cell proliferation, promotes cell migration, inhibits apoptosis and induces permeabilization of blood vessels. Binds to the FLT1/VEGFR1 and KDR/VEGFR2 receptors, heparan sulfate and heparin. Binds to the NRP1/neuropilin-1 receptor. Binding to NRP1 receptor initiates a signaling pathway needed for motor neuron axon guidance and cell body migration, including for the caudal migration of facial motor neurons from rhombomere 4 to rhombomere 6 during embryonic development. Also binds the DEAR/FBXW7-AS1 receptor. May play a role in increasing vascular permeability during lactation, when increased transport of molecules from the blood is required for efficient milk protein synthesis. The polypeptide is Vascular endothelial growth factor A, long form (Vegfa) (Mus musculus (Mouse)).